The following is a 171-amino-acid chain: UPF0312 protein SAR2769 (171 aa).

It belongs to the UPF0312 family.

This Staphylococcus aureus (strain MRSA252) protein is UPF0312 protein SAR2769.